Consider the following 180-residue polypeptide: Oligoribonuclease (180 aa).

The 164-residue stretch at 7–170 (LIWIDLEMTG…SDIQDSIDEL (164 aa)) folds into the Exonuclease domain. Residue Tyr128 is part of the active site.

Belongs to the oligoribonuclease family.

The protein localises to the cytoplasm. Its function is as follows. 3'-to-5' exoribonuclease specific for small oligoribonucleotides. In Ruthia magnifica subsp. Calyptogena magnifica, this protein is Oligoribonuclease.